Here is a 128-residue protein sequence, read N- to C-terminus: ATP synthase epsilon chain (128 aa).

A disordered region spans residues glutamate 98–arginine 128. Basic residues predominate over residues arginine 118–arginine 128.

It belongs to the ATPase epsilon chain family. F-type ATPases have 2 components, CF(1) - the catalytic core - and CF(0) - the membrane proton channel. CF(1) has five subunits: alpha(3), beta(3), gamma(1), delta(1), epsilon(1). CF(0) has three main subunits: a, b and c.

The protein resides in the cell inner membrane. Produces ATP from ADP in the presence of a proton gradient across the membrane. This chain is ATP synthase epsilon chain, found in Rhodopirellula baltica (strain DSM 10527 / NCIMB 13988 / SH1).